We begin with the raw amino-acid sequence, 85 residues long: Three-finger toxin MALT0044C (85 aa).

The signal sequence occupies residues 1 to 21 (MKTLLLTLVVVTIVCLDLGNT). Disulfide bonds link Cys-24–Cys-45, Cys-38–Cys-63, Cys-67–Cys-78, and Cys-79–Cys-84.

This sequence belongs to the three-finger toxin family. Short-chain subfamily. Expressed by the venom gland.

The protein resides in the secreted. The chain is Three-finger toxin MALT0044C from Micrurus altirostris (Uruguayan coral snake).